The sequence spans 57 residues: COP9 signalosome complex subunit 9 (57 aa).

The protein belongs to the CSN9 family. As to quaternary structure, component of the CSN complex, probably composed of cops1, cops2, cops3, cops4, cops5, cops6, cops7, cops8 and cops9.

The protein resides in the nucleus. It is found in the cytoplasm. It localises to the nucleoplasm. Component of the COP9 signalosome complex (CSN), a complex involved in various cellular and developmental processes. The CSN complex is an essential regulator of the ubiquitin (Ubl) conjugation pathway by mediating the deneddylation of the cullin subunits of SCF-type E3 ligase complexes, leading to decrease the Ubl ligase activity. May play a role in cell proliferation. The sequence is that of COP9 signalosome complex subunit 9 from Xenopus laevis (African clawed frog).